Reading from the N-terminus, the 198-residue chain is FMN-dependent NADH:quinone oxidoreductase (198 aa).

FMN is bound by residues 92-95 (MWNL) and 136-139 (SRGG).

This sequence belongs to the azoreductase type 1 family. In terms of assembly, homodimer. FMN is required as a cofactor.

It carries out the reaction 2 a quinone + NADH + H(+) = 2 a 1,4-benzosemiquinone + NAD(+). The catalysed reaction is N,N-dimethyl-1,4-phenylenediamine + anthranilate + 2 NAD(+) = 2-(4-dimethylaminophenyl)diazenylbenzoate + 2 NADH + 2 H(+). Functionally, quinone reductase that provides resistance to thiol-specific stress caused by electrophilic quinones. Its function is as follows. Also exhibits azoreductase activity. Catalyzes the reductive cleavage of the azo bond in aromatic azo compounds to the corresponding amines. The chain is FMN-dependent NADH:quinone oxidoreductase from Clostridium perfringens (strain ATCC 13124 / DSM 756 / JCM 1290 / NCIMB 6125 / NCTC 8237 / Type A).